The primary structure comprises 599 residues: Genetic interactor of prohibitins 3, mitochondrial (599 aa).

Residues 1-46 (MLSLRRSIWIAACKRVSSFRTTIPIKSLHTNSQPVLSLRNVKFRPY) constitute a mitochondrion transit peptide. In terms of domain architecture, CP-type G spans 158–368 (IESLDAIMTS…MHDVPGFGEN (211 aa)). Residues 312-342 (NSGASTPSDIRALRRKNEQEKNRTGPGASYM) form a disordered region. A compositionally biased stretch (basic and acidic residues) spans 322–334 (RALRRKNEQEKNR).

It belongs to the TRAFAC class YlqF/YawG GTPase family. GEP3 subfamily.

The protein localises to the mitochondrion. Its function is as follows. May be involved in the mitochondrial lipid metabolism. The protein is Genetic interactor of prohibitins 3, mitochondrial (GEP3) of Meyerozyma guilliermondii (strain ATCC 6260 / CBS 566 / DSM 6381 / JCM 1539 / NBRC 10279 / NRRL Y-324) (Yeast).